The chain runs to 239 residues: Ribosomal RNA small subunit methyltransferase G (239 aa).

S-adenosyl-L-methionine is bound by residues Gly-79, Phe-84, Ala-130–Glu-131, and Arg-149.

Belongs to the methyltransferase superfamily. RNA methyltransferase RsmG family.

Its subcellular location is the cytoplasm. Specifically methylates the N7 position of a guanine in 16S rRNA. The protein is Ribosomal RNA small subunit methyltransferase G of Lactobacillus delbrueckii subsp. bulgaricus (strain ATCC 11842 / DSM 20081 / BCRC 10696 / JCM 1002 / NBRC 13953 / NCIMB 11778 / NCTC 12712 / WDCM 00102 / Lb 14).